The chain runs to 36 residues: Endoglucanase Cel12A (36 aa).

It belongs to the glycosyl hydrolase 12 (cellulase H) family.

It localises to the secreted. The protein localises to the extracellular space. It catalyses the reaction Endohydrolysis of (1-&gt;4)-beta-D-glucosidic linkages in cellulose, lichenin and cereal beta-D-glucans.. Its function is as follows. Has carboxymethylcellulase activity. The polypeptide is Endoglucanase Cel12A (Gloeophyllum trabeum (Brown rot fungus)).